A 175-amino-acid polypeptide reads, in one-letter code: ATP synthase subunit b (175 aa).

Residues 22–44 traverse the membrane as a helical segment; sequence MLVQLFFFLILLALLKKFAWGPL.

The protein belongs to the ATPase B chain family. In terms of assembly, F-type ATPases have 2 components, F(1) - the catalytic core - and F(0) - the membrane proton channel. F(1) has five subunits: alpha(3), beta(3), gamma(1), delta(1), epsilon(1). F(0) has three main subunits: a(1), b(2) and c(10-14). The alpha and beta chains form an alternating ring which encloses part of the gamma chain. F(1) is attached to F(0) by a central stalk formed by the gamma and epsilon chains, while a peripheral stalk is formed by the delta and b chains.

It localises to the cell membrane. Its function is as follows. F(1)F(0) ATP synthase produces ATP from ADP in the presence of a proton or sodium gradient. F-type ATPases consist of two structural domains, F(1) containing the extramembraneous catalytic core and F(0) containing the membrane proton channel, linked together by a central stalk and a peripheral stalk. During catalysis, ATP synthesis in the catalytic domain of F(1) is coupled via a rotary mechanism of the central stalk subunits to proton translocation. In terms of biological role, component of the F(0) channel, it forms part of the peripheral stalk, linking F(1) to F(0). The polypeptide is ATP synthase subunit b (Oceanobacillus iheyensis (strain DSM 14371 / CIP 107618 / JCM 11309 / KCTC 3954 / HTE831)).